The following is a 377-amino-acid chain: Transmembrane 6 superfamily member 2 (377 aa).

Transmembrane regions (helical) follow at residues 10–30 (IAAL…VSAL), 34–54 (LWVA…VYSL), 63–83 (PLYA…IIAL), 111–131 (FICY…AGAI), 140–160 (FGLY…TGNI), 170–190 (PAFF…MKVF), 219–239 (LALV…GLVV), 269–289 (MLMY…ALTF), and 332–352 (TWGC…LLAY). EXPERA domains are found at residues 61–186 (YDPL…CWAG) and 217–351 (ADLA…HLLA).

The protein belongs to the TM6SF family. Substantial expression in liver and intestine, whereas all other tissues analyzed show low levels.

It is found in the endoplasmic reticulum membrane. It localises to the endoplasmic reticulum-Golgi intermediate compartment membrane. Regulator of liver fat metabolism influencing triglyceride secretion and hepatic lipid droplet content. May function as sterol isomerase. This chain is Transmembrane 6 superfamily member 2 (TM6SF2), found in Homo sapiens (Human).